The chain runs to 411 residues: Pyruvate dehydrogenase E1 component subunit alpha, mitochondrial (411 aa).

The transit peptide at 1–29 (MFSRAVRLSRAALPIRVASQRVPIAARRS) directs the protein to the mitochondrion. Pyruvate is bound by residues His111, Tyr137, Arg138, Gly184, Val186, Asp215, Gly216, Ala217, Asn244, and Tyr246. Thiamine diphosphate is bound by residues Tyr137, Arg138, Gly184, Val186, Asp215, Gly216, Ala217, and Asn244. Mg(2+) is bound at residue Asp215. Residues Asn244 and Tyr246 each coordinate Mg(2+). Thiamine diphosphate is bound at residue His311.

In terms of assembly, eukaryotic pyruvate dehydrogenase (PDH) complexes are organized as a core consisting of the oligomeric dihydrolipoamide acetyl-transferase (E2), around which are arranged multiple copies of pyruvate dehydrogenase (E1), dihydrolipoamide dehydrogenase (E3) and protein X (E3BP) bound by non-covalent bonds. The Chaetomium thermophilum PDH complex contains 60 E2 units, 12 E3BP units, about 20 E1 units, and 12 or more E3 units. The units are organized in 1 E2 60-mer, 4 E3BP trimers, about 20 E1 tetramers, and a maximum of 12 E3 dimers. Pyruvate dehydrogenase (E1) is active as a tetramer of 2 alpha and 2 beta subunits. The E3BP trimers are bound inside the icosahedral core with tetrahedral symmetry. Thiamine diphosphate serves as cofactor. It depends on Mg(2+) as a cofactor.

It localises to the mitochondrion. The enzyme catalyses N(6)-[(R)-lipoyl]-L-lysyl-[protein] + pyruvate + H(+) = N(6)-[(R)-S(8)-acetyldihydrolipoyl]-L-lysyl-[protein] + CO2. The 10-megadalton pyruvate dehydrogenase complex contains multiple copies of three enzymatic components: pyruvate dehydrogenase (E1), dihydrolipoamide acetyltransferase (E2) and lipoamide dehydrogenase (E3) and catalyzes the overall oxidative decarboxylation of pyruvate to form acetyl-CoA and CO(2). Within the complex, pyruvate and thiamine pyrophosphate (TPP or vitamin B1) are bound by pyruvate dehydrogenase E1 subunits alpha and beta and pyruvate is decarboxylated leading to the 2-carbon hydrohyethyl bound to TPP. The E2 component contains covalently-bound lipoyl cofactors and transfers the hydroxyethyl group from TPP to an oxidized form of covalently bound lipoamide, and the resulting acetyl group is then transferred to free coenzyme A to form acetyl-CoA and reduced dihydrolipoamide-E2. Finally, the flavoprotein dihydrolipoamide dehydrogenase (E3) re-oxidizes the lipoyl group of dihydrolipoamide-E2 to form lipoamide-E2 and NADH. A fourth subunit, E3BP, is responsible for tethering E3 in proximity to the core, forming the entire metabolon. The sequence is that of Pyruvate dehydrogenase E1 component subunit alpha, mitochondrial from Chaetomium thermophilum (strain DSM 1495 / CBS 144.50 / IMI 039719) (Thermochaetoides thermophila).